The primary structure comprises 530 residues: Carbohydrate sulfotransferase 2 (530 aa).

Positions 1–20 (MSRSSPRALPPGALPRPLPA) are disordered. Over 1–54 (MSRSSPRALPPGALPRPLPAAPAAVQRALLPPWPRRAGRRWPASPLGMKVFRRK) the chain is Cytoplasmic. Over residues 8 to 20 (ALPPGALPRPLPA) the composition is skewed to pro residues. Residues 55–75 (ALVLCAGYALLLVLTMLNLLD) traverse the membrane as a helical; Signal-anchor for type II membrane protein segment. Residues 76 to 530 (YKWHKEPLQQ…SKTLLRKPRL (455 aa)) lie on the Lumenal side of the membrane. Residues 97 to 128 (GAAGAGWGRPGSPPAAPPRAHSRMDPRTPYRP) form a disordered region. 173–179 (WRSGSSF) provides a ligand contact to 3'-phosphoadenylyl sulfate. N-linked (GlcNAc...) asparagine glycosylation occurs at Asn243. A 3'-phosphoadenylyl sulfate-binding site is contributed by 332 to 340 (RDPRAVASS). N-linked (GlcNAc...) asparagine glycosylation is found at Asn457 and Asn475.

Belongs to the sulfotransferase 1 family. Gal/GlcNAc/GalNAc subfamily. As to quaternary structure, homodimer; disulfide-linked. Homodimerization is not essential for enzyme activity. In brain, it is expressed in pyramidal cells in the CA3 subregion of the hippocampus, cerebellar nucleus and Purkinje cells. Expressed in peripheral lymph nodes.

The protein localises to the golgi apparatus. It is found in the trans-Golgi network membrane. The enzyme catalyses 3-O-{N-acetyl-beta-D-glucosaminyl-(1-&gt;3)-beta-D-galactosyl-(1-&gt;3)-N-acetyl-alpha-D-galactosaminyl}-L-threonyl-[protein] + 3'-phosphoadenylyl sulfate = 3-O-{6-O-sulfo-N-acetyl-beta-D-glucosaminyl-(1-&gt;3)-beta-D-galactosyl-(1-&gt;3)-N-acetyl-alpha-D-galactosaminyl}-L-threonyl-[protein] + adenosine 3',5'-bisphosphate + H(+). The catalysed reaction is 3-O-{N-acetyl-beta-D-glucosaminyl-(1-&gt;3)-beta-D-galactosyl-(1-&gt;3)-N-acetyl-alpha-D-galactosaminyl}-L-seryl-[protein] + 3'-phosphoadenylyl sulfate = 3-O-{6-O-sulfo-N-acetyl-beta-D-glucosaminyl-(1-&gt;3)-beta-D-galactosyl-(1-&gt;3)-N-acetyl-alpha-D-galactosaminyl}-L-seryl-[protein] + adenosine 3',5'-bisphosphate + H(+). It carries out the reaction a 3-O-{beta-D-galactosyl-(1-&gt;3)-[N-acetyl-beta-D-glucosaminyl-(1-&gt;6)]-N-acetyl-alpha-D-galactosaminyl}-L-threonyl-[protein] + 3'-phosphoadenylyl sulfate = 3-O-{beta-D-galactosyl-(1-&gt;3)-[6-O-sulfo-N-acetyl-beta-D-glucosaminyl-(1-&gt;6)]-N-acetyl-alpha-D-galactosaminyl}-L-threonyl-[protein] + adenosine 3',5'-bisphosphate + H(+). It catalyses the reaction 3-O-{beta-D-galactosyl-(1-&gt;3)-[N-acetyl-beta-D-glucosaminyl-(1-&gt;6)]-N-acetyl-alpha-D-galactosaminyl}-L-seryl-[protein] + 3'-phosphoadenylyl sulfate = 3-O-{beta-D-galactosyl-(1-&gt;3)-[6-O-sulfo-N-acetyl-beta-D-glucosaminyl-(1-&gt;6)]-N-acetyl-alpha-D-galactosaminyl}-L-seryl-[protein] + adenosine 3',5'-bisphosphate + H(+). The protein operates within protein modification; carbohydrate sulfation. Sulfotransferase that utilizes 3'-phospho-5'-adenylyl sulfate (PAPS) as sulfonate donor to catalyze the transfer of sulfate to position 6 of non-reducing N-acetylglucosamine (GlcNAc) residues within keratan-like structures on N-linked glycans and within mucin-associated glycans that can ultimately serve as SELL ligands. SELL ligands are present in high endothelial cells (HEVs) and play a central role in lymphocyte homing at sites of inflammation. Participates in biosynthesis of the SELL ligand sialyl 6-sulfo Lewis X and in lymphocyte homing to Peyer patches. Has no activity toward O-linked sugars. Its substrate specificity may be influenced by its subcellular location. Sulfates GlcNAc residues at terminal, non-reducing ends of oligosaccharide chains. This is Carbohydrate sulfotransferase 2 (Chst2) from Mus musculus (Mouse).